A 79-amino-acid chain; its full sequence is Large ribosomal subunit protein eL38 (79 aa).

The protein belongs to the eukaryotic ribosomal protein eL38 family.

The chain is Large ribosomal subunit protein eL38 (RPL38) from Theileria parva (East coast fever infection agent).